The following is a 438-amino-acid chain: 23S rRNA (uracil(1939)-C(5))-methyltransferase RlmD (438 aa).

Residues 11 to 69 form the TRAM domain; sequence LQPESKHQQVLVEKLDHQGAGIAYLNKKPLFIDGTLPGEEVVTQLTESKSKFARGKLIK. 4 residues coordinate [4Fe-4S] cluster: Cys82, Cys88, Cys91, and Cys169. Residues Gln272, Phe301, Asn306, Glu322, Asn349, and Asp370 each contribute to the S-adenosyl-L-methionine site. The active-site Nucleophile is Cys396.

It belongs to the class I-like SAM-binding methyltransferase superfamily. RNA M5U methyltransferase family. RlmD subfamily.

It catalyses the reaction uridine(1939) in 23S rRNA + S-adenosyl-L-methionine = 5-methyluridine(1939) in 23S rRNA + S-adenosyl-L-homocysteine + H(+). Catalyzes the formation of 5-methyl-uridine at position 1939 (m5U1939) in 23S rRNA. This chain is 23S rRNA (uracil(1939)-C(5))-methyltransferase RlmD, found in Vibrio vulnificus (strain YJ016).